The primary structure comprises 714 residues: Fatty acid oxidation complex subunit alpha (714 aa).

Residues 1 to 190 are enoyl-CoA hydratase; that stretch reads MEMTSAFTLN…KLGLVDDVVP (190 aa). The 3-hydroxyacyl-CoA dehydrogenase stretch occupies residues 306 to 714; it reads APLNSVGILG…FWKTTATDLQ (409 aa).

It in the N-terminal section; belongs to the enoyl-CoA hydratase/isomerase family. In the central section; belongs to the 3-hydroxyacyl-CoA dehydrogenase family. Heterotetramer of two alpha chains (FadJ) and two beta chains (FadI).

It is found in the cytoplasm. The enzyme catalyses a (3S)-3-hydroxyacyl-CoA = a (2E)-enoyl-CoA + H2O. It carries out the reaction a 4-saturated-(3S)-3-hydroxyacyl-CoA = a (3E)-enoyl-CoA + H2O. It catalyses the reaction a (3S)-3-hydroxyacyl-CoA + NAD(+) = a 3-oxoacyl-CoA + NADH + H(+). The catalysed reaction is (3S)-3-hydroxybutanoyl-CoA = (3R)-3-hydroxybutanoyl-CoA. It participates in lipid metabolism; fatty acid beta-oxidation. Functionally, catalyzes the formation of a hydroxyacyl-CoA by addition of water on enoyl-CoA. Also exhibits 3-hydroxyacyl-CoA epimerase and 3-hydroxyacyl-CoA dehydrogenase activities. Strongly involved in the anaerobic degradation of long and medium-chain fatty acids in the presence of nitrate and weakly involved in the aerobic degradation of long-chain fatty acids. The chain is Fatty acid oxidation complex subunit alpha (fadJ) from Escherichia coli (strain K12).